The following is a 232-amino-acid chain: Octanoyltransferase (232 aa).

The BPL/LPL catalytic domain maps to 44 to 219 (EHTADEVWVV…QLARQFGLVL (176 aa)). Residues 83 to 90 (RGGQVTYH), 150 to 152 (ALG), and 163 to 165 (GLS) each bind substrate. C181 serves as the catalytic Acyl-thioester intermediate.

Belongs to the LipB family.

The protein resides in the cytoplasm. It carries out the reaction octanoyl-[ACP] + L-lysyl-[protein] = N(6)-octanoyl-L-lysyl-[protein] + holo-[ACP] + H(+). Its pathway is protein modification; protein lipoylation via endogenous pathway; protein N(6)-(lipoyl)lysine from octanoyl-[acyl-carrier-protein]: step 1/2. Catalyzes the transfer of endogenously produced octanoic acid from octanoyl-acyl-carrier-protein onto the lipoyl domains of lipoate-dependent enzymes. Lipoyl-ACP can also act as a substrate although octanoyl-ACP is likely to be the physiological substrate. The sequence is that of Octanoyltransferase from Xanthomonas euvesicatoria pv. vesicatoria (strain 85-10) (Xanthomonas campestris pv. vesicatoria).